The chain runs to 313 residues: Beta-ribofuranosylphenol 5'-phosphate synthase (313 aa).

This sequence belongs to the beta-RFA-P synthase family. Homodimer.

It carries out the reaction 5-phospho-alpha-D-ribose 1-diphosphate + 4-hydroxybenzoate + H(+) = 4-(beta-D-ribofuranosyl)phenol 5'-phosphate + CO2 + diphosphate. It catalyses the reaction 4-aminobenzoate + 5-phospho-alpha-D-ribose 1-diphosphate + H(+) = 4-(beta-D-ribofuranosyl)aminobenzene 5'-phosphate + CO2 + diphosphate. Its pathway is cofactor biosynthesis; 5,6,7,8-tetrahydromethanopterin biosynthesis. Catalyzes the condensation of 4-hydroxybenzoate (HB) with 5-phospho-alpha-D-ribose 1-diphosphate (PRPP) to produce beta-ribofuranosylphenol 5'-phosphate (beta-RFH-P). Also catalyzes the condensation of 4-aminobenzoate (pABA) with PRPP to produce beta-ribofuranosylaminobenzene 5'-phosphate (beta-RFA-P). The chain is Beta-ribofuranosylphenol 5'-phosphate synthase from Archaeoglobus fulgidus (strain ATCC 49558 / DSM 4304 / JCM 9628 / NBRC 100126 / VC-16).